A 428-amino-acid polypeptide reads, in one-letter code: Pregnancy-specific beta-1-glycoprotein 3 (428 aa).

The N-terminal stretch at 1-34 (MGPLSAPPCTQRITWKGLLLTALLLNFWNLPTTA) is a signal peptide. Positions 35-144 (QVTIEAEPTK…TGHFTFTLYL (110 aa)) constitute an Ig-like V-type domain. Residues asparagine 104 and asparagine 111 are each glycosylated (N-linked (GlcNAc...) asparagine). The Cell attachment site motif lies at 127–129 (RGD). Ig-like C2-type domains lie at 147–234 (PKPS…VTLN), 240–327 (PKPY…VTLN), and 335–410 (PRIY…KSMT). Cystine bridges form between cysteine 169-cysteine 217, cysteine 262-cysteine 310, and cysteine 354-cysteine 394. N-linked (GlcNAc...) asparagine glycosylation is found at asparagine 268 and asparagine 303.

The protein belongs to the immunoglobulin superfamily. CEA family.

The protein localises to the secreted. This Homo sapiens (Human) protein is Pregnancy-specific beta-1-glycoprotein 3 (PSG3).